Reading from the N-terminus, the 371-residue chain is Heterodimeric geranylgeranyl pyrophosphate synthase large subunit 1, chloroplastic (371 aa).

The transit peptide at 1–51 (MASVTLGSWIVVHHHNHHHPSSILTKSRSRSCPITLTKPISFRSKRTVSSS) directs the protein to the chloroplast. The residue at position 52 (serine 52) is an N-acetylserine. The isopentenyl diphosphate site is built by lysine 116, arginine 119, and histidine 148. The Mg(2+) site is built by aspartate 155 and aspartate 161. Arginine 166 serves as a coordination point for dimethylallyl diphosphate. Isopentenyl diphosphate is bound at residue arginine 167. The dimethylallyl diphosphate site is built by lysine 256, threonine 257, glutamine 294, lysine 311, and lysine 321.

It belongs to the FPP/GGPP synthase family. Forms homodimers. Part of a heterodimeric geranyl(geranyl)diphosphate synthase. Interacts with GGR. The cofactor is Mg(2+). As to expression, expressed ubiquitously.

It localises to the plastid. Its subcellular location is the chloroplast. It is found in the cytoplasm. It carries out the reaction isopentenyl diphosphate + dimethylallyl diphosphate = (2E)-geranyl diphosphate + diphosphate. The catalysed reaction is isopentenyl diphosphate + (2E)-geranyl diphosphate = (2E,6E)-farnesyl diphosphate + diphosphate. The enzyme catalyses isopentenyl diphosphate + (2E,6E)-farnesyl diphosphate = (2E,6E,10E)-geranylgeranyl diphosphate + diphosphate. It participates in isoprenoid biosynthesis; farnesyl diphosphate biosynthesis; farnesyl diphosphate from geranyl diphosphate and isopentenyl diphosphate: step 1/1. The protein operates within isoprenoid biosynthesis; geranyl diphosphate biosynthesis; geranyl diphosphate from dimethylallyl diphosphate and isopentenyl diphosphate: step 1/1. Its pathway is isoprenoid biosynthesis; geranylgeranyl diphosphate biosynthesis; geranylgeranyl diphosphate from farnesyl diphosphate and isopentenyl diphosphate: step 1/1. Its function is as follows. Heterodimeric geranyl(geranyl)-diphosphate (GPP) synthase large subunit. In vitro, the large subunit catalyzes mainly the trans-addition of the three molecules of IPP onto DMAPP to form geranylgeranyl pyrophosphate while the small subunit alone is inactive. Upon association of the two subunits, the product profile changes and the production of gerany-diphosphate is strongly increased. The sequence is that of Heterodimeric geranylgeranyl pyrophosphate synthase large subunit 1, chloroplastic (GGPPS1) from Arabidopsis thaliana (Mouse-ear cress).